Here is a 70-residue protein sequence, read N- to C-terminus: Large ribosomal subunit protein eL38 (70 aa).

This sequence belongs to the eukaryotic ribosomal protein eL38 family.

The polypeptide is Large ribosomal subunit protein eL38 (RpL38) (Plutella xylostella (Diamondback moth)).